A 206-amino-acid chain; its full sequence is Emopamil-binding protein-like (206 aa).

Helical transmembrane passes span 10–30, 42–62, 101–121, and 165–185; these read EAGG…ALGL, GALI…GPFV, VEIL…YAIV, and CWLY…LLLW. Residues 39–184 form the EXPERA domain; it reads ADRGALIWLC…VWVLIPGLLL (146 aa).

This sequence belongs to the EBP family. Homodimer. In terms of tissue distribution, widely expressed with highest levels in liver, lung and kidney.

The protein localises to the endoplasmic reticulum membrane. Functionally, does not possess sterol isomerase activity and does not bind sigma ligands. This chain is Emopamil-binding protein-like (EBPL), found in Homo sapiens (Human).